Reading from the N-terminus, the 199-residue chain is Prolactin (199 aa).

Residues Cys-4 and Cys-11 are joined by a disulfide bond. 3 positions are modified to phosphoserine: Ser-26, Ser-34, and Ser-90. 2 disulfides stabilise this stretch: Cys-58–Cys-174 and Cys-191–Cys-199.

The protein belongs to the somatotropin/prolactin family. Interacts with PRLR.

The protein resides in the secreted. Functionally, prolactin acts primarily on the mammary gland by promoting lactation. The sequence is that of Prolactin (PRL) from Loxodonta africana (African elephant).